Here is a 461-residue protein sequence, read N- to C-terminus: Fumarate hydratase class II (461 aa).

Substrate contacts are provided by residues 98-100 (SGT), 129-132 (HPND), 139-141 (SSN), and T187. Positions 120–140 (SKKGGKSPVHPNDHVNKGQSS) are disordered. Residue H188 is the Proton donor/acceptor of the active site. S318 is a catalytic residue. Substrate is bound by residues S319 and 324 to 326 (KVN).

This sequence belongs to the class-II fumarase/aspartase family. Fumarase subfamily. Homotetramer.

The protein localises to the cytoplasm. The enzyme catalyses (S)-malate = fumarate + H2O. It participates in carbohydrate metabolism; tricarboxylic acid cycle; (S)-malate from fumarate: step 1/1. In terms of biological role, involved in the TCA cycle. Catalyzes the stereospecific interconversion of fumarate to L-malate. This chain is Fumarate hydratase class II, found in Rickettsia felis (strain ATCC VR-1525 / URRWXCal2) (Rickettsia azadi).